The primary structure comprises 404 residues: Argininosuccinate synthase (404 aa).

ATP-binding positions include 12 to 20 and Ala-39; that span reads AYSGGLDTS. L-citrulline-binding residues include Tyr-91 and Ser-96. Residue Gly-121 coordinates ATP. Residues Thr-123, Asn-127, and Asp-128 each contribute to the L-aspartate site. Asn-127 is a binding site for L-citrulline. L-citrulline-binding residues include Arg-131, Ser-180, Ser-189, Glu-265, and Tyr-277.

The protein belongs to the argininosuccinate synthase family. Type 1 subfamily. In terms of assembly, homotetramer.

Its subcellular location is the cytoplasm. It carries out the reaction L-citrulline + L-aspartate + ATP = 2-(N(omega)-L-arginino)succinate + AMP + diphosphate + H(+). The protein operates within amino-acid biosynthesis; L-arginine biosynthesis; L-arginine from L-ornithine and carbamoyl phosphate: step 2/3. This is Argininosuccinate synthase from Vibrio cholerae serotype O1 (strain ATCC 39541 / Classical Ogawa 395 / O395).